We begin with the raw amino-acid sequence, 41 residues long: Probable cinnamyl alcohol dehydrogenase 2 (41 aa).

It belongs to the zinc-containing alcohol dehydrogenase family. Requires Zn(2+) as cofactor.

The catalysed reaction is (E)-cinnamyl alcohol + NADP(+) = (E)-cinnamaldehyde + NADPH + H(+). The enzyme catalyses (E)-coniferol + NADP(+) = (E)-coniferaldehyde + NADPH + H(+). It catalyses the reaction (E)-sinapyl alcohol + NADP(+) = (E)-sinapaldehyde + NADPH + H(+). It carries out the reaction (E)-4-coumaroyl alcohol + NADP(+) = (E)-4-coumaraldehyde + NADPH + H(+). The catalysed reaction is (E)-caffeyl alcohol + NADP(+) = (E)-caffeyl aldehyde + NADPH + H(+). It participates in aromatic compound metabolism; phenylpropanoid biosynthesis. Functionally, involved in lignin biosynthesis. Catalyzes the final step specific for the production of lignin monomers, like coniferyl alcohol, sinapyl alcohol and 4-coumaryl alcohol. The polypeptide is Probable cinnamyl alcohol dehydrogenase 2 (Pseudotsuga menziesii (Douglas-fir)).